A 136-amino-acid polypeptide reads, in one-letter code: Large ribosomal subunit protein eL27 (136 aa).

In terms of domain architecture, KOW spans 5 to 40; it reads MKPGKVVMVLAGRYAGRKAVIVKNIDDGTADRPYSH.

The protein belongs to the eukaryotic ribosomal protein eL27 family. In terms of assembly, component of the large ribosomal subunit.

It localises to the cytoplasm. It is found in the cytosol. The protein resides in the rough endoplasmic reticulum. Component of the large ribosomal subunit. The sequence is that of Large ribosomal subunit protein eL27 (rpl27) from Hippocampus comes (Tiger tail seahorse).